The chain runs to 449 residues: CCA-adding enzyme (449 aa).

Residues Ser-57 and Arg-60 each coordinate ATP. Residues Ser-57 and Arg-60 each coordinate CTP. Residues Asp-69, Asp-71, and Asp-124 each contribute to the Mg(2+) site. His-147, Lys-167, and Tyr-176 together coordinate ATP. Residues His-147, Lys-167, and Tyr-176 each coordinate CTP.

Belongs to the tRNA nucleotidyltransferase/poly(A) polymerase family. Archaeal CCA-adding enzyme subfamily. Homodimer. Mg(2+) is required as a cofactor.

The catalysed reaction is a tRNA precursor + 2 CTP + ATP = a tRNA with a 3' CCA end + 3 diphosphate. The enzyme catalyses a tRNA with a 3' CCA end + 2 CTP + ATP = a tRNA with a 3' CCACCA end + 3 diphosphate. In terms of biological role, catalyzes the addition and repair of the essential 3'-terminal CCA sequence in tRNAs without using a nucleic acid template. Adds these three nucleotides in the order of C, C, and A to the tRNA nucleotide-73, using CTP and ATP as substrates and producing inorganic pyrophosphate. tRNA 3'-terminal CCA addition is required both for tRNA processing and repair. Also involved in tRNA surveillance by mediating tandem CCA addition to generate a CCACCA at the 3' terminus of unstable tRNAs. While stable tRNAs receive only 3'-terminal CCA, unstable tRNAs are marked with CCACCA and rapidly degraded. In Methanocaldococcus jannaschii (strain ATCC 43067 / DSM 2661 / JAL-1 / JCM 10045 / NBRC 100440) (Methanococcus jannaschii), this protein is CCA-adding enzyme.